We begin with the raw amino-acid sequence, 135 residues long: ATP synthase epsilon chain (135 aa).

This sequence belongs to the ATPase epsilon chain family. F-type ATPases have 2 components, CF(1) - the catalytic core - and CF(0) - the membrane proton channel. CF(1) has five subunits: alpha(3), beta(3), gamma(1), delta(1), epsilon(1). CF(0) has three main subunits: a, b and c.

The protein resides in the cell inner membrane. Its function is as follows. Produces ATP from ADP in the presence of a proton gradient across the membrane. The chain is ATP synthase epsilon chain from Rhizobium rhizogenes (strain K84 / ATCC BAA-868) (Agrobacterium radiobacter).